Reading from the N-terminus, the 262-residue chain is ATP synthase subunit a 1 (262 aa).

5 helical membrane-spanning segments follow: residues 30–50 (TVHI…ILVF), 91–111 (IAPL…MDLI), 131–151 (IVPT…FALM), 201–221 (LFGN…LMPW), and 232–252 (AIFH…LTIV).

Belongs to the ATPase A chain family. F-type ATPases have 2 components, CF(1) - the catalytic core - and CF(0) - the membrane proton channel. CF(1) has five subunits: alpha(3), beta(3), gamma(1), delta(1), epsilon(1). CF(0) has three main subunits: a(1), b(2) and c(9-12). The alpha and beta chains form an alternating ring which encloses part of the gamma chain. CF(1) is attached to CF(0) by a central stalk formed by the gamma and epsilon chains, while a peripheral stalk is formed by the delta and b chains.

The protein localises to the cell inner membrane. Functionally, key component of the proton channel; it plays a direct role in the translocation of protons across the membrane. This Photobacterium profundum (strain SS9) protein is ATP synthase subunit a 1.